The following is a 76-amino-acid chain: Conotoxin MaIr332 (76 aa).

The first 21 residues, 1–21 (MKLTCVIVAVLFLTAWTFVTA), serve as a signal peptide directing secretion. A propeptide spanning residues 22–48 (DDSGNGLENLFSKAHHEMKNPKDSKLN) is cleaved from the precursor. 3 disulfides stabilise this stretch: C51-C66, C58-C70, and C65-C75.

The protein belongs to the conotoxin O1 superfamily. As to expression, expressed by the venom duct.

It is found in the secreted. The protein is Conotoxin MaIr332 of Conus marmoreus (Marble cone).